The primary structure comprises 295 residues: Probable aspartoacylase (295 aa).

H13 and E16 together coordinate Zn(2+). Substrate contacts are provided by residues R54 and 61–62 (NR). H100 contacts Zn(2+). Residues E158 and Y268 each coordinate substrate.

This sequence belongs to the AspA/AstE family. Aspartoacylase subfamily. It depends on Zn(2+) as a cofactor.

The enzyme catalyses an N-acyl-L-aspartate + H2O = a carboxylate + L-aspartate. The chain is Probable aspartoacylase from Prochlorococcus marinus subsp. pastoris (strain CCMP1986 / NIES-2087 / MED4).